The sequence spans 335 residues: Adenine deaminase (335 aa).

Positions 14, 16, and 194 each coordinate Zn(2+). Residue glutamate 197 is the Proton donor of the active site. Aspartate 275 lines the Zn(2+) pocket. Position 276 (aspartate 276) interacts with substrate.

It belongs to the metallo-dependent hydrolases superfamily. Adenosine and AMP deaminases family. Adenine deaminase type 2 subfamily. Requires Zn(2+) as cofactor.

It catalyses the reaction adenine + H2O + H(+) = hypoxanthine + NH4(+). Its function is as follows. Catalyzes the hydrolytic deamination of adenine to hypoxanthine. Plays an important role in the purine salvage pathway and in nitrogen catabolism. In Chlorobium phaeobacteroides (strain BS1), this protein is Adenine deaminase.